Reading from the N-terminus, the 86-residue chain is IDINNGENIFTANCSACHAGGNNVIMPEKTLKKDALADNKMVSVNAITYQVTNGKNAMPAFGSRLAETDIEDVANFVLTQSDKGWD.

The heme c site is built by Cys14, Cys17, His18, and Met58.

This sequence belongs to the cytochrome c family. PetJ subfamily. As to quaternary structure, monomer. Binds 1 heme c group covalently per subunit.

It is found in the plastid. It localises to the chloroplast thylakoid lumen. Its function is as follows. Functions as an electron carrier between membrane-bound cytochrome b6-f and photosystem I in oxygenic photosynthesis. The protein is Cytochrome c6 (petJ) of Alaria esculenta (Irish wakame).